The following is a 379-amino-acid chain: 2-nitroimidazole nitrohydrolase (379 aa).

Catalysis depends on Cys-357, which acts as the Amidino-cysteine intermediate.

It belongs to the arginine deiminase family.

It catalyses the reaction 2-nitroimidazole + H2O = 1,3-dihydro-2H-imidazol-2-one + nitrite + H(+). Involved in the biodegradation of 2-Nitroimidazole (2NI) which is a natural antibiotic and an analog of the synthetic nitroimidazoles used for treatment of tuberculosis, Chagas disease (also called American Trypanosomiasis) and cancer. Catalyzes the hydrolytic denitration of 2NI to produce imidazol-2-one and nitrite. It is also active against the 2NI synthetic derivative benznidazole. NnhA confers drug resistance to 2NI. The protein is 2-nitroimidazole nitrohydrolase (nnhA) of Mycobacterium sp. (strain JS330).